A 129-amino-acid chain; its full sequence is SOSS complex subunit C homolog (129 aa).

Positions 105–129 (RLEPLPSPATTPTTPNAPPSHNISK) are disordered.

This sequence belongs to the SOSS-C family.

In Drosophila erecta (Fruit fly), this protein is SOSS complex subunit C homolog.